A 537-amino-acid chain; its full sequence is O-phosphoserine--tRNA(Cys) ligase (537 aa).

Substrate is bound by residues 186 to 188 (HMT), 231 to 233 (SAS), 273 to 274 (YY), and N317.

The protein belongs to the class-II aminoacyl-tRNA synthetase family. O-phosphoseryl-tRNA(Cys) synthetase subfamily. As to quaternary structure, homotetramer. Interacts with SepCysS.

It catalyses the reaction tRNA(Cys) + O-phospho-L-serine + ATP = O-phospho-L-seryl-tRNA(Cys) + AMP + diphosphate. Its function is as follows. Catalyzes the attachment of O-phosphoserine (Sep) to tRNA(Cys). This Methanococcus maripaludis (strain C5 / ATCC BAA-1333) protein is O-phosphoserine--tRNA(Cys) ligase.